A 365-amino-acid chain; its full sequence is NADH-quinone oxidoreductase subunit H (365 aa).

Helical transmembrane passes span L27–A47, F99–V119, A133–W153, A168–M188, F206–V226, I268–I288, I294–F314, and L329–M349.

The protein belongs to the complex I subunit 1 family. In terms of assembly, NDH-1 is composed of 14 different subunits. Subunits NuoA, H, J, K, L, M, N constitute the membrane sector of the complex.

The protein resides in the cell inner membrane. The enzyme catalyses a quinone + NADH + 5 H(+)(in) = a quinol + NAD(+) + 4 H(+)(out). Functionally, NDH-1 shuttles electrons from NADH, via FMN and iron-sulfur (Fe-S) centers, to quinones in the respiratory chain. The immediate electron acceptor for the enzyme in this species is believed to be ubiquinone. Couples the redox reaction to proton translocation (for every two electrons transferred, four hydrogen ions are translocated across the cytoplasmic membrane), and thus conserves the redox energy in a proton gradient. This subunit may bind ubiquinone. In Nitrosomonas eutropha (strain DSM 101675 / C91 / Nm57), this protein is NADH-quinone oxidoreductase subunit H.